We begin with the raw amino-acid sequence, 171 residues long: Group 1 truncated hemoglobin LI410 (171 aa).

Residues 1-23 constitute a chloroplast transit peptide; that stretch reads MMRTVQLRTLRPCIRAQQQPVRA. Heme-binding residues include Y63 and H111.

Belongs to the truncated hemoglobin family. Group I subfamily. The cofactor is heme.

It is found in the plastid. Its subcellular location is the chloroplast. The protein is Group 1 truncated hemoglobin LI410 (LI410) of Chlamydomonas moewusii (Chlamydomonas eugametos).